Consider the following 397-residue polypeptide: 1-deoxy-D-xylulose 5-phosphate reductoisomerase (397 aa).

T10, G11, S12, I13, N39, and N125 together coordinate NADPH. K126 contributes to the 1-deoxy-D-xylulose 5-phosphate binding site. E127 serves as a coordination point for NADPH. D151 provides a ligand contact to Mn(2+). Residues S152, E153, S187, and H210 each contribute to the 1-deoxy-D-xylulose 5-phosphate site. Position 153 (E153) interacts with Mn(2+). An NADPH-binding site is contributed by G216. Residues S223, N228, K229, and E232 each coordinate 1-deoxy-D-xylulose 5-phosphate. E232 is a binding site for Mn(2+).

The protein belongs to the DXR family. Homodimer. Mg(2+) is required as a cofactor. It depends on Mn(2+) as a cofactor.

It catalyses the reaction 2-C-methyl-D-erythritol 4-phosphate + NADP(+) = 1-deoxy-D-xylulose 5-phosphate + NADPH + H(+). Its pathway is isoprenoid biosynthesis; isopentenyl diphosphate biosynthesis via DXP pathway; isopentenyl diphosphate from 1-deoxy-D-xylulose 5-phosphate: step 1/6. Functionally, catalyzes the NADPH-dependent rearrangement and reduction of 1-deoxy-D-xylulose-5-phosphate (DXP) to 2-C-methyl-D-erythritol 4-phosphate (MEP). This Wigglesworthia glossinidia brevipalpis protein is 1-deoxy-D-xylulose 5-phosphate reductoisomerase.